Consider the following 425-residue polypeptide: 3-phosphoshikimate 1-carboxyvinyltransferase (425 aa).

Residues lysine 23, serine 24, and arginine 28 each contribute to the 3-phosphoshikimate site. Lysine 23 lines the phosphoenolpyruvate pocket. Positions 96 and 124 each coordinate phosphoenolpyruvate. 3-phosphoshikimate is bound by residues threonine 170, serine 171, glutamine 172, serine 198, aspartate 314, and lysine 341. Glutamine 172 contributes to the phosphoenolpyruvate binding site. Residue aspartate 314 is the Proton acceptor of the active site. 3 residues coordinate phosphoenolpyruvate: arginine 345, arginine 386, and lysine 411.

It belongs to the EPSP synthase family. As to quaternary structure, monomer.

Its subcellular location is the cytoplasm. It carries out the reaction 3-phosphoshikimate + phosphoenolpyruvate = 5-O-(1-carboxyvinyl)-3-phosphoshikimate + phosphate. The protein operates within metabolic intermediate biosynthesis; chorismate biosynthesis; chorismate from D-erythrose 4-phosphate and phosphoenolpyruvate: step 6/7. Its function is as follows. Catalyzes the transfer of the enolpyruvyl moiety of phosphoenolpyruvate (PEP) to the 5-hydroxyl of shikimate-3-phosphate (S3P) to produce enolpyruvyl shikimate-3-phosphate and inorganic phosphate. This chain is 3-phosphoshikimate 1-carboxyvinyltransferase, found in Nostoc sp. (strain PCC 7120 / SAG 25.82 / UTEX 2576).